We begin with the raw amino-acid sequence, 447 residues long: D-ribitol-5-phosphate cytidylyltransferase (447 aa).

The protein belongs to the IspD/TarI cytidylyltransferase family. IspD subfamily. As to quaternary structure, homodimer.

Its subcellular location is the cytoplasm. The protein localises to the cytosol. It carries out the reaction D-ribitol 5-phosphate + CTP + H(+) = CDP-L-ribitol + diphosphate. It catalyses the reaction D-ribose 5-phosphate + CTP + H(+) = CDP-D-ribose + diphosphate. The catalysed reaction is D-ribulose 5-phosphate + CTP + H(+) = CDP-D-ribulose + diphosphate. It participates in protein modification; protein glycosylation. Functionally, cytidylyltransferase required for protein O-linked mannosylation. Catalyzes the formation of CDP-ribitol nucleotide sugar from D-ribitol 5-phosphate. CDP-ribitol is a substrate of FKTN during the biosynthesis of the phosphorylated O-mannosyl trisaccharide (N-acetylgalactosamine-beta-3-N-acetylglucosamine-beta-4-(phosphate-6-)mannose), a carbohydrate structure present in alpha-dystroglycan (DAG1), which is required for binding laminin G-like domain-containing extracellular proteins with high affinity. Shows activity toward other pentose phosphate sugars and mediates formation of CDP-ribulose or CDP-ribose using CTP and ribulose-5-phosphate or ribose-5-phosphate, respectively. Not involved in dolichol production. The polypeptide is D-ribitol-5-phosphate cytidylyltransferase (Crppa) (Mus musculus (Mouse)).